The primary structure comprises 325 residues: Hydroxymethylglutaryl-CoA lyase, mitochondrial (325 aa).

The N-terminal 27 residues, 1–27 (MAAMRKAVPRRLVGLASLRAVSTSSMG), are a transit peptide targeting the mitochondrion. Residues 33 to 300 (VKIVEVGPRD…HTGVNLQKLL (268 aa)) form the Pyruvate carboxyltransferase domain. Arg41 is a binding site for substrate. Asp42 contacts a divalent metal cation. Lys48 is subject to N6-acetyllysine; alternate. Lys48 carries the post-translational modification N6-succinyllysine; alternate. The residue at position 111 (Lys111) is an N6-acetyllysine. 2 positions are modified to N6-acetyllysine; alternate: Lys137 and Lys179. 2 positions are modified to N6-succinyllysine; alternate: Lys137 and Lys179. Residues His233 and His235 each contribute to the a divalent metal cation site. The active site involves Cys266. Position 275 (Asn275) interacts with a divalent metal cation. Residues 323–325 (CKL) carry the Microbody targeting signal motif. An N6-acetyllysine modification is found at Lys324.

It belongs to the HMG-CoA lyase family. In terms of assembly, homodimer; disulfide-linked. Can also form homotetramers.

It is found in the mitochondrion matrix. Its subcellular location is the peroxisome. The enzyme catalyses (3S)-3-hydroxy-3-methylglutaryl-CoA = acetoacetate + acetyl-CoA. It participates in metabolic intermediate metabolism; (S)-3-hydroxy-3-methylglutaryl-CoA degradation; acetoacetate from (S)-3-hydroxy-3-methylglutaryl-CoA: step 1/1. Mitochondrial 3-hydroxy-3-methylglutaryl-CoA lyase that catalyzes a cation-dependent cleavage of (S)-3-hydroxy-3-methylglutaryl-CoA into acetyl-CoA and acetoacetate, a key step in ketogenesis. Terminal step in leucine catabolism. Ketone bodies (beta-hydroxybutyrate, acetoacetate and acetone) are essential as an alternative source of energy to glucose, as lipid precursors and as regulators of metabolism. In Pongo abelii (Sumatran orangutan), this protein is Hydroxymethylglutaryl-CoA lyase, mitochondrial (HMGCL).